The chain runs to 547 residues: Chaperonin GroEL (547 aa).

ATP-binding positions include 30–33 (TLGP), Lys51, 87–91 (DGTTT), Gly415, and Asp496.

Belongs to the chaperonin (HSP60) family. As to quaternary structure, forms a cylinder of 14 subunits composed of two heptameric rings stacked back-to-back. Interacts with the co-chaperonin GroES.

Its subcellular location is the cytoplasm. The catalysed reaction is ATP + H2O + a folded polypeptide = ADP + phosphate + an unfolded polypeptide.. Together with its co-chaperonin GroES, plays an essential role in assisting protein folding. The GroEL-GroES system forms a nano-cage that allows encapsulation of the non-native substrate proteins and provides a physical environment optimized to promote and accelerate protein folding. The polypeptide is Chaperonin GroEL (Chlorobium phaeobacteroides (strain DSM 266 / SMG 266 / 2430)).